We begin with the raw amino-acid sequence, 245 residues long: 1-(5-phosphoribosyl)-5-[(5-phosphoribosylamino)methylideneamino] imidazole-4-carboxamide isomerase (245 aa).

The active-site Proton acceptor is the Asp8. The active-site Proton donor is the Asp130.

The protein belongs to the HisA/HisF family.

The protein localises to the cytoplasm. The enzyme catalyses 1-(5-phospho-beta-D-ribosyl)-5-[(5-phospho-beta-D-ribosylamino)methylideneamino]imidazole-4-carboxamide = 5-[(5-phospho-1-deoxy-D-ribulos-1-ylimino)methylamino]-1-(5-phospho-beta-D-ribosyl)imidazole-4-carboxamide. Its pathway is amino-acid biosynthesis; L-histidine biosynthesis; L-histidine from 5-phospho-alpha-D-ribose 1-diphosphate: step 4/9. This is 1-(5-phosphoribosyl)-5-[(5-phosphoribosylamino)methylideneamino] imidazole-4-carboxamide isomerase from Pseudomonas savastanoi pv. phaseolicola (strain 1448A / Race 6) (Pseudomonas syringae pv. phaseolicola (strain 1448A / Race 6)).